We begin with the raw amino-acid sequence, 159 residues long: Large ribosomal subunit protein uL22 (159 aa).

It belongs to the universal ribosomal protein uL22 family. Part of the 50S ribosomal subunit.

Its function is as follows. This protein binds specifically to 23S rRNA. It makes multiple contacts with different domains of the 23S rRNA in the assembled 50S subunit and ribosome. In terms of biological role, the globular domain of the protein is located near the polypeptide exit tunnel on the outside of the subunit, while an extended beta-hairpin is found that lines the wall of the exit tunnel in the center of the 70S ribosome. The chain is Large ribosomal subunit protein uL22 from Ignicoccus hospitalis (strain KIN4/I / DSM 18386 / JCM 14125).